Here is a 249-residue protein sequence, read N- to C-terminus: Triosephosphate isomerase (249 aa).

Substrate-binding residues include N12 and K14. K14 bears the N6-acetyllysine mark. Y68 carries the post-translational modification 3'-nitrotyrosine. A Phosphoserine modification is found at S80. The active-site Electrophile is H96. S106 is modified (phosphoserine). K142 participates in a covalent cross-link: Glycyl lysine isopeptide (Lys-Gly) (interchain with G-Cter in SUMO1). K149 carries the N6-succinyllysine modification. At K156 the chain carries N6-acetyllysine; alternate. K156 carries the N6-succinyllysine; alternate modification. Residue E166 is the Proton acceptor of the active site. The residue at position 173 (T173) is a Phosphothreonine. K194 is modified (N6-acetyllysine; alternate). N6-succinyllysine; alternate is present on K194. N6-methyllysine; alternate is present on K194. At S198 the chain carries Phosphoserine. A 3'-nitrotyrosine modification is found at Y209. Residue S212 is modified to Phosphoserine. T214 is subject to Phosphothreonine. At S223 the chain carries Phosphoserine. Residue K238 is modified to N6-acetyllysine.

It belongs to the triosephosphate isomerase family. Homodimer.

It is found in the cytoplasm. It catalyses the reaction dihydroxyacetone phosphate = methylglyoxal + phosphate. The enzyme catalyses D-glyceraldehyde 3-phosphate = dihydroxyacetone phosphate. The protein operates within carbohydrate degradation; glycolysis; D-glyceraldehyde 3-phosphate from glycerone phosphate: step 1/1. It functions in the pathway carbohydrate biosynthesis; gluconeogenesis. Its function is as follows. Triosephosphate isomerase is an extremely efficient metabolic enzyme that catalyzes the interconversion between dihydroxyacetone phosphate (DHAP) and D-glyceraldehyde-3-phosphate (G3P) in glycolysis and gluconeogenesis. Functionally, it is also responsible for the non-negligible production of methylglyoxal a reactive cytotoxic side-product that modifies and can alter proteins, DNA and lipids. This is Triosephosphate isomerase (Tpi1) from Rattus norvegicus (Rat).